The chain runs to 344 residues: 3-dehydroquinate synthase (344 aa).

NAD(+) contacts are provided by residues 60-65 (DGEEYK), 94-98 (GVISD), 118-119 (TT), K131, K140, and 158-161 (FLNT). Positions 173, 232, and 249 each coordinate Zn(2+).

Belongs to the sugar phosphate cyclases superfamily. Dehydroquinate synthase family. The cofactor is Co(2+). Requires Zn(2+) as cofactor. NAD(+) is required as a cofactor.

The protein resides in the cytoplasm. It carries out the reaction 7-phospho-2-dehydro-3-deoxy-D-arabino-heptonate = 3-dehydroquinate + phosphate. It participates in metabolic intermediate biosynthesis; chorismate biosynthesis; chorismate from D-erythrose 4-phosphate and phosphoenolpyruvate: step 2/7. Functionally, catalyzes the conversion of 3-deoxy-D-arabino-heptulosonate 7-phosphate (DAHP) to dehydroquinate (DHQ). This Campylobacter hominis (strain ATCC BAA-381 / DSM 21671 / CCUG 45161 / LMG 19568 / NCTC 13146 / CH001A) protein is 3-dehydroquinate synthase.